Here is a 261-residue protein sequence, read N- to C-terminus: Cytochrome c oxidase subunit 3 (261 aa).

Residues 1-15 (MTHQTHAYHMVNPSP) lie on the Mitochondrial matrix side of the membrane. A helical transmembrane segment spans residues 16–34 (WPLTGALSALLMTSGLIMW). At 35–40 (FHFNST) the chain is on the mitochondrial intermembrane side. A helical membrane pass occupies residues 41–66 (TLLMLGLTTNMLTMYQWWRDVIREST). Over 67-72 (FQGHHT) the chain is Mitochondrial matrix. The chain crosses the membrane as a helical span at residues 73–105 (PNVQKGLRYGMILFIISEVLFFTGFFWAFYHSS). Residues 106-128 (LAPTPELGGCWPPTGIHPLNPLE) lie on the Mitochondrial intermembrane side of the membrane. A helical transmembrane segment spans residues 129–152 (VPLLNTSVLLASGVSITWAHHSLM). The Mitochondrial matrix portion of the chain corresponds to 153–155 (EGN). Residues 156 to 183 (RNHMLQALFITIALGVYFTLLQASEYYE) form a helical membrane-spanning segment. Residues 184-190 (APFTISD) lie on the Mitochondrial intermembrane side of the membrane. Residues 191-223 (GVYGSTFFVATGFHGLHVIIGSTFLIVCFFRQL) form a helical membrane-spanning segment. Residues 224–232 (KFHFTSNHH) lie on the Mitochondrial matrix side of the membrane. Residues 233 to 256 (FGFEAAAWYWHFVDVVWLFLYVSI) form a helical membrane-spanning segment. Residues 257 to 261 (YWWGS) are Mitochondrial intermembrane-facing.

It belongs to the cytochrome c oxidase subunit 3 family. In terms of assembly, component of the cytochrome c oxidase (complex IV, CIV), a multisubunit enzyme composed of 14 subunits. The complex is composed of a catalytic core of 3 subunits MT-CO1, MT-CO2 and MT-CO3, encoded in the mitochondrial DNA, and 11 supernumerary subunits COX4I, COX5A, COX5B, COX6A, COX6B, COX6C, COX7A, COX7B, COX7C, COX8 and NDUFA4, which are encoded in the nuclear genome. The complex exists as a monomer or a dimer and forms supercomplexes (SCs) in the inner mitochondrial membrane with NADH-ubiquinone oxidoreductase (complex I, CI) and ubiquinol-cytochrome c oxidoreductase (cytochrome b-c1 complex, complex III, CIII), resulting in different assemblies (supercomplex SCI(1)III(2)IV(1) and megacomplex MCI(2)III(2)IV(2)).

It is found in the mitochondrion inner membrane. It carries out the reaction 4 Fe(II)-[cytochrome c] + O2 + 8 H(+)(in) = 4 Fe(III)-[cytochrome c] + 2 H2O + 4 H(+)(out). In terms of biological role, component of the cytochrome c oxidase, the last enzyme in the mitochondrial electron transport chain which drives oxidative phosphorylation. The respiratory chain contains 3 multisubunit complexes succinate dehydrogenase (complex II, CII), ubiquinol-cytochrome c oxidoreductase (cytochrome b-c1 complex, complex III, CIII) and cytochrome c oxidase (complex IV, CIV), that cooperate to transfer electrons derived from NADH and succinate to molecular oxygen, creating an electrochemical gradient over the inner membrane that drives transmembrane transport and the ATP synthase. Cytochrome c oxidase is the component of the respiratory chain that catalyzes the reduction of oxygen to water. Electrons originating from reduced cytochrome c in the intermembrane space (IMS) are transferred via the dinuclear copper A center (CU(A)) of subunit 2 and heme A of subunit 1 to the active site in subunit 1, a binuclear center (BNC) formed by heme A3 and copper B (CU(B)). The BNC reduces molecular oxygen to 2 water molecules using 4 electrons from cytochrome c in the IMS and 4 protons from the mitochondrial matrix. The polypeptide is Cytochrome c oxidase subunit 3 (MT-CO3) (Antilope cervicapra (Blackbuck)).